Consider the following 31-residue polypeptide: Cytochrome b6-f complex subunit 6 (31 aa).

A helical membrane pass occupies residues 3-23 (ILISYFCFLLIFFLFTLILFF).

It belongs to the PetL family. In terms of assembly, the 4 large subunits of the cytochrome b6-f complex are cytochrome b6, subunit IV (17 kDa polypeptide, PetD), cytochrome f and the Rieske protein, while the 4 small subunits are PetG, PetL, PetM and PetN. The complex functions as a dimer.

It is found in the plastid. Its subcellular location is the chloroplast thylakoid membrane. Component of the cytochrome b6-f complex, which mediates electron transfer between photosystem II (PSII) and photosystem I (PSI), cyclic electron flow around PSI, and state transitions. PetL is important for photoautotrophic growth as well as for electron transfer efficiency and stability of the cytochrome b6-f complex. This chain is Cytochrome b6-f complex subunit 6, found in Gnetum parvifolium (Small-leaved jointfir).